Here is a 309-residue protein sequence, read N- to C-terminus: Tagatose-6-phosphate kinase (309 aa).

Belongs to the carbohydrate kinase PfkB family. LacC subfamily.

It carries out the reaction D-tagatofuranose 6-phosphate + ATP = D-tagatofuranose 1,6-bisphosphate + ADP + H(+). It functions in the pathway carbohydrate metabolism; D-tagatose 6-phosphate degradation; D-glyceraldehyde 3-phosphate and glycerone phosphate from D-tagatose 6-phosphate: step 1/2. This Streptococcus pyogenes serotype M28 (strain MGAS6180) protein is Tagatose-6-phosphate kinase.